The sequence spans 191 residues: dCTP deaminase (191 aa).

Residues 112–117 (KSTYAR), 136–138 (TLE), Q157, Y173, and Q183 contribute to the dCTP site. The active-site Proton donor/acceptor is the E138.

Belongs to the dCTP deaminase family. Homotrimer.

The enzyme catalyses dCTP + H2O + H(+) = dUTP + NH4(+). It participates in pyrimidine metabolism; dUMP biosynthesis; dUMP from dCTP (dUTP route): step 1/2. Functionally, catalyzes the deamination of dCTP to dUTP. The chain is dCTP deaminase from Psychrobacter arcticus (strain DSM 17307 / VKM B-2377 / 273-4).